A 299-amino-acid polypeptide reads, in one-letter code: Acetylglutamate kinase (299 aa).

Substrate-binding positions include 64-65 (GG), R86, and N197.

The protein belongs to the acetylglutamate kinase family. ArgB subfamily.

The protein localises to the cytoplasm. It catalyses the reaction N-acetyl-L-glutamate + ATP = N-acetyl-L-glutamyl 5-phosphate + ADP. It participates in amino-acid biosynthesis; L-arginine biosynthesis; N(2)-acetyl-L-ornithine from L-glutamate: step 2/4. Functionally, catalyzes the ATP-dependent phosphorylation of N-acetyl-L-glutamate. The chain is Acetylglutamate kinase from Persephonella marina (strain DSM 14350 / EX-H1).